The sequence spans 647 residues: MYFHITYSDLDINETHDDDLKDFLIIPEEDIFGQFVTHILDPNENDLYEIEPDKICKNPFSSSIYTNNITIKNKYSLLDANIYEILLSKGISKYIDGLLVWAINFNLLWLLELIYNYKPPINLKDREIYLNSNCDDINLIKFIVTRNDYFQINLESLLEYVDNKEIIIYLMDFIDTDKIVKYVIGNCSSEFFIDCIKGNTILTQEHIKLAVQNRKIPVLEHLINLGIEYDLNEIINDIKDFDILKYMLEIGNSLNEDNVNIIIFNIHTTQLIEYLMNLGYTINSKLVISMFSHMLIVSENTDIVEFLKSINAKDSDLTVDFIEYLLEDNFEKAKQIMEYFPGANTVIDCNLFLKYAIISQDIPNIEYSINKGADLKKYYKNILLTNNVTILDLCLNHCEINDVNNFILKIIENDCIETLKYLVDNNYNIDLLDMFQIMVKKNYYNPIRKYICEQIKNNNLLIPNLVEIIMNLFFDDGDVNWILKYNFEYQYKDNLDEIIMTIIIGDCDGAKNMIMNYNYTSDLKVLYAFILKEFPEECSSEKMDTIKFLLDFNADNNEYVQSAFLLSVFYTPLLKYFVEDKQIDLTVNGQNIVEYLISDGDHEIFRYLYYNGFDVKNNGFEIINAHNSNNECAITKLIESIKNNTYQ.

9 ANK repeats span residues 123–154 (LKDR…QINL), 202–231 (LTQE…EYDL), 233–256 (EIIN…SLNE), 258–284 (NVNI…TINS), 289–319 (SMFS…DLTV), 348–377 (DCNL…DLKK), 401–431 (NDVN…NIDL), 529–558 (FILK…DNNE), and 588–617 (NGQN…DVKN).

This Acanthamoeba polyphaga (Amoeba) protein is Putative ankyrin repeat protein L764.